The following is a 501-amino-acid chain: Zinc finger and SCAN domain-containing protein 12 (501 aa).

Glycyl lysine isopeptide (Lys-Gly) (interchain with G-Cter in SUMO2) cross-links involve residues K20 and K26. Positions 51–132 constitute an SCAN box domain; that stretch reads QFCYQETSGP…DLERELDELG (82 aa). Residues 175-194 are disordered; that stretch reads REAQEEQVSGVETGNEPRNV. Residues 180-194 show a composition bias toward polar residues; that stretch reads EQVSGVETGNEPRNV. Residue K197 forms a Glycyl lysine isopeptide (Lys-Gly) (interchain with G-Cter in SUMO2) linkage. The tract at residues 223–255 is disordered; sequence EAHNPGEESSGISHEDSQPLRNENGVNSPANSE. Over residues 241–253 the composition is skewed to polar residues; that stretch reads PLRNENGVNSPAN. 6 consecutive C2H2-type zinc fingers follow at residues 269-291, 297-319, 325-347, 353-375, 381-403, and 409-431; these read HGCDECGKSFTQHSRLIEHKRVH, YKCEVCGKTFRWRTVLIRHKVVH, YKCNECGRAFGQWSALNQHQRLH, YHCNECGKAFCQKAGLFHHLKSH, YQCLQCNKSFNRRSTLSQHQGVH, and YECNDCGKAFVYNSSLATHQETH. The disordered stretch occupies residues 429–450; that stretch reads ETHHKEKPFTQSGPIQQQRNHT. The segment covering 437-447 has biased composition (polar residues); the sequence is FTQSGPIQQQR. The C2H2-type 7 zinc-finger motif lies at 455–477; it reads YKCSVCGKAFIQKISLIEHEQIH. The segment at 483–501 adopts a C2H2-type 8; degenerate zinc-finger fold; it reads YKCAEGGKAFIQMSELTEH.

The protein belongs to the krueppel C2H2-type zinc-finger protein family. As to expression, testis specific.

It localises to the nucleus. Functionally, may be involved in transcriptional regulation. The protein is Zinc finger and SCAN domain-containing protein 12 (Zscan12) of Mus musculus (Mouse).